The following is a 133-amino-acid chain: uncharacterized protein (133 aa).

2 helical membrane passes run 13–33 (FLLSVVGSGNSLSILNGLFLS) and 73–93 (FGNPLVTSLNIMYSLFYLLLL).

It is found in the membrane. This is an uncharacterized protein from Saccharomyces cerevisiae (strain ATCC 204508 / S288c) (Baker's yeast).